The following is a 361-amino-acid chain: DNA replication and repair protein RecF (361 aa).

An ATP-binding site is contributed by 30–37 (GQNAQGKT).

The protein belongs to the RecF family.

It is found in the cytoplasm. Functionally, the RecF protein is involved in DNA metabolism; it is required for DNA replication and normal SOS inducibility. RecF binds preferentially to single-stranded, linear DNA. It also seems to bind ATP. The protein is DNA replication and repair protein RecF of Streptococcus gordonii (strain Challis / ATCC 35105 / BCRC 15272 / CH1 / DL1 / V288).